Consider the following 508-residue polypeptide: Probable ligand-gated ion channel 46 (508 aa).

A signal peptide spans 1 to 18; the sequence is MQYLQFLSLVVLLLMCHA. The Extracellular segment spans residues 19-274; that stretch reads RKSVYRRNSP…FEFKRRAGWY (256 aa). Asn65, Asn134, Asn175, and Asn201 each carry an N-linked (GlcNAc...) asparagine glycan. Cys190 and Cys204 are joined by a disulfide. Residues 275–295 form a helical membrane-spanning segment; sequence ILQAYLPTYLTICISWISFAL. Topologically, residues 296–301 are cytoplasmic; it reads GSKAIP. A helical transmembrane segment spans residues 302-321; that stretch reads ARTMLGVNSLLAMTFQFGNI. At 322–335 the chain is on the extracellular side; that stretch reads IRNLPRVSYVKAID. The chain crosses the membrane as a helical span at residues 336 to 356; that stretch reads VWMLSCMTFVFCSLLELAWVG. The Cytoplasmic segment spans residues 357 to 480; sequence YLSREEEPTS…KQRREILAHK (124 aa). The segment at 374 to 407 is disordered; it reads AQVAPKPCHPPPVQQNANNSSVHRRQKQPKNEEE. A helical membrane pass occupies residues 481–501; sequence IDSVSVFMFPFLFVLFNIAYW. The Extracellular portion of the chain corresponds to 502–508; that stretch reads QHYLRGY.

This sequence belongs to the ligand-gated ion channel (TC 1.A.9) family. In terms of tissue distribution, expressed in the nervous system, with high expression in cholinergic motor neurons and weak expression in GABAergic motor neurons.

It localises to the presynaptic cell membrane. Its subcellular location is the cell projection. The protein resides in the axon. It is found in the cytoplasmic vesicle. The protein localises to the secretory vesicle. It localises to the synaptic vesicle. Probable component of a ligand-gated anion channel. Negatively regulates synaptic transmission and synaptic vesicle release in response to acetylcholine in cholinergic motor neurons. Role in synaptic vesicle release kinetics may be in association with the ligand-gated ion channel protein acc-4. The polypeptide is Probable ligand-gated ion channel 46 (Caenorhabditis elegans).